Reading from the N-terminus, the 419-residue chain is Transcription termination factor Rho (419 aa).

Residues 48-123 (EISGDGVLEI…LKVDTINFDR (76 aa)) enclose the Rho RNA-BD domain. 3 RNA-binding regions span residues 61–66 (GFGFLR), 78–80 (DIY), and 108–110 (ERY). ATP contacts are provided by residues 169-174 (GKGQRG), 181-186 (KAGKTI), and R212. Residues 284 to 288 (VLTGG) are RNA-binding 2.

It belongs to the Rho family. As to quaternary structure, homohexamer. The homohexamer assembles into an open ring structure.

In terms of biological role, facilitates transcription termination by a mechanism that involves Rho binding to the nascent RNA, activation of Rho's RNA-dependent ATPase activity, and release of the mRNA from the DNA template. This chain is Transcription termination factor Rho, found in Pseudomonas fluorescens biotype C.